Here is a 176-residue protein sequence, read N- to C-terminus: Ribosome maturation factor RimM (176 aa).

One can recognise a PRC barrel domain in the interval 97–176 (EDEFYWRDLI…QIIVDWDPDF (80 aa)).

It belongs to the RimM family. In terms of assembly, binds ribosomal protein uS19.

The protein localises to the cytoplasm. An accessory protein needed during the final step in the assembly of 30S ribosomal subunit, possibly for assembly of the head region. Essential for efficient processing of 16S rRNA. May be needed both before and after RbfA during the maturation of 16S rRNA. It has affinity for free ribosomal 30S subunits but not for 70S ribosomes. This chain is Ribosome maturation factor RimM, found in Shewanella amazonensis (strain ATCC BAA-1098 / SB2B).